We begin with the raw amino-acid sequence, 275 residues long: MNYNQPATLQAAILDWAGTVVDFGSFAPTQIFVEAFAEFGVQVSLEEARGPMGMGKWDHIRTLCDIPAIAERYRAVFGRLPSDDDVTAIYERFMPLQIEKIAEHSALIPGALQAIAELRGMGLKIGSCSGYPAVVMEKVVALAETNGYVADHVVATDEVPNGRPWPAQALANVIALGIDDVAACVKVDDTWPGILEGRRAGMWTVALTCSGNALGLTYEQYQALPAAELERERTRIEQMFEGSRPHYLIETIAELPAVVRDINARLARGEMPQGN.

The active-site Nucleophile is the D15. Residues D15 and A17 each contribute to the Mg(2+) site. K56 serves as the catalytic Schiff-base intermediate with substrate. A Mg(2+)-binding site is contributed by D189.

Belongs to the HAD-like hydrolase superfamily. PhnX family. In terms of assembly, homodimer. Mg(2+) serves as cofactor.

It carries out the reaction phosphonoacetaldehyde + H2O = acetaldehyde + phosphate + H(+). Its activity is regulated as follows. Inhibited by phosphite, moderately inhibited by phosphonic acids, the corresponding aminophosphonic acids activate the enzyme. In terms of biological role, involved in phosphonate degradation. This is Phosphonoacetaldehyde hydrolase from Pseudomonas aeruginosa (strain ATCC 15692 / DSM 22644 / CIP 104116 / JCM 14847 / LMG 12228 / 1C / PRS 101 / PAO1).